The chain runs to 227 residues: MTKNEYLIEKLQADLANHITELTSAYGEVTIECEVQNLLPVMIELRDREEFSFDQLIDLCGVDYLHYGDYDWETESATEHGFSRGVERQEAKAYAVNKPRFAVVYHLLSTKKNHRLRVKLFVEESHLIVPSVHHLWKSANWFEREAYDLYGILFDGHPDLRRLLTDYGFIGHPFRKDFPLSGEVEMRYDAKLQKVIYAPVDIVPRIVVPKVIRNDNRYIGNEGSKND.

This sequence belongs to the complex I 30 kDa subunit family. In terms of assembly, NDH-1 is composed of 14 different subunits. Subunits NuoB, C, D, E, F, and G constitute the peripheral sector of the complex.

It localises to the cell inner membrane. It carries out the reaction a quinone + NADH + 5 H(+)(in) = a quinol + NAD(+) + 4 H(+)(out). In terms of biological role, NDH-1 shuttles electrons from NADH, via FMN and iron-sulfur (Fe-S) centers, to quinones in the respiratory chain. The immediate electron acceptor for the enzyme in this species is believed to be ubiquinone. Couples the redox reaction to proton translocation (for every two electrons transferred, four hydrogen ions are translocated across the cytoplasmic membrane), and thus conserves the redox energy in a proton gradient. The protein is NADH-quinone oxidoreductase subunit C of Legionella pneumophila subsp. pneumophila (strain Philadelphia 1 / ATCC 33152 / DSM 7513).